Reading from the N-terminus, the 243-residue chain is MAELLLGVNIDHIATLRNARGTAYPDPVQAAFIAEQAGADGITVHLREDRRHITDRDVRILRQTLDTRMNLEMAVTEEMLAIAVETKPHFCCLVPEKRQEVTTEGGQDVAGQRDKMRDACKRLADAGIQVSLFIDADEEQIKAAAEVGAPFIEIHTGCYADAKTDAEQAQELARIAKAATFAASLGLKVNAGHGLTYHNVKAIAAIPEMHELNIGHAIIGRAVMTGLKDAVAEMKRLMLEARG.

3-amino-2-oxopropyl phosphate is bound at residue Asn9. Residue 11–12 coordinates 1-deoxy-D-xylulose 5-phosphate; the sequence is DH. Arg20 is a 3-amino-2-oxopropyl phosphate binding site. The Proton acceptor role is filled by His45. 1-deoxy-D-xylulose 5-phosphate contacts are provided by Arg47 and His52. The active-site Proton acceptor is Glu72. Thr102 is a binding site for 1-deoxy-D-xylulose 5-phosphate. His193 (proton donor) is an active-site residue. 3-amino-2-oxopropyl phosphate contacts are provided by residues Gly194 and 215-216; that span reads GH.

It belongs to the PNP synthase family. In terms of assembly, homooctamer; tetramer of dimers.

Its subcellular location is the cytoplasm. It carries out the reaction 3-amino-2-oxopropyl phosphate + 1-deoxy-D-xylulose 5-phosphate = pyridoxine 5'-phosphate + phosphate + 2 H2O + H(+). It participates in cofactor biosynthesis; pyridoxine 5'-phosphate biosynthesis; pyridoxine 5'-phosphate from D-erythrose 4-phosphate: step 5/5. Catalyzes the complicated ring closure reaction between the two acyclic compounds 1-deoxy-D-xylulose-5-phosphate (DXP) and 3-amino-2-oxopropyl phosphate (1-amino-acetone-3-phosphate or AAP) to form pyridoxine 5'-phosphate (PNP) and inorganic phosphate. This is Pyridoxine 5'-phosphate synthase from Shigella dysenteriae serotype 1 (strain Sd197).